The chain runs to 348 residues: Ricin B-like lectin R40C1 (348 aa).

Positions 1 to 26 (MFGFGHHGHHGQDQPPQHHGGGGGGA) are disordered. The region spanning 199-345 (TVRIFCKADE…CEGDNQRWKI (147 aa)) is the Ricin B-type lectin domain.

As to expression, expressed in roots and shoots.

In terms of biological role, lectin which binds carbohydrates in vitro. Interacts through its lectin domain with glycan structures containing specific motifs. The protein is Ricin B-like lectin R40C1 of Oryza sativa subsp. japonica (Rice).